Here is a 399-residue protein sequence, read N- to C-terminus: Glutathione-independent formaldehyde dehydrogenase (399 aa).

Cys47 provides a ligand contact to Zn(2+). NAD(+) is bound by residues Gly48, Ser49, and His52. Residues His68, Cys98, Cys101, Cys104, Cys112, and Asp170 each contribute to the Zn(2+) site. Residues Val198, Asp218, Arg223, Val263, Arg268, His270, Pro300, Leu302, Gly337, and Thr339 each contribute to the NAD(+) site.

This sequence belongs to the zinc-containing alcohol dehydrogenase family. Homotetramer. Requires Zn(2+) as cofactor.

It catalyses the reaction formaldehyde + NAD(+) + H2O = formate + NADH + 2 H(+). It carries out the reaction acetaldehyde + NAD(+) + H2O = acetate + NADH + 2 H(+). The catalysed reaction is 2 formaldehyde + H2O = methanol + formate + H(+). With respect to regulation, inactivated by bipyridine and p-chloromercuribenzoate. Dehydrogenase that catalyzes the NAD(+)-dependent oxidation of formaldehyde and acetaldehyde, and, to a lesser extent, long-chain alcohols, but is inactive against propionaldehyde, butyraldehyde, methanol and ethanol. Can also catalyze the dismutation of a wide range of aldehydes such as formaldehyde. The sequence is that of Glutathione-independent formaldehyde dehydrogenase from Pseudomonas putida (Arthrobacter siderocapsulatus).